We begin with the raw amino-acid sequence, 180 residues long: Large ribosomal subunit protein uL6c (180 aa).

Belongs to the universal ribosomal protein uL6 family. Part of the 50S ribosomal subunit.

It is found in the plastid. The protein resides in the chloroplast. In terms of biological role, binds 23S rRNA. This is Large ribosomal subunit protein uL6c (rpl6) from Pyropia yezoensis (Susabi-nori).